The following is a 731-amino-acid chain: 1,4-alpha-glucan branching enzyme GlgB (731 aa).

Asp412 serves as the catalytic Nucleophile. Glu465 functions as the Proton donor in the catalytic mechanism.

The protein belongs to the glycosyl hydrolase 13 family. GlgB subfamily. Monomer.

It carries out the reaction Transfers a segment of a (1-&gt;4)-alpha-D-glucan chain to a primary hydroxy group in a similar glucan chain.. It functions in the pathway glycan biosynthesis; glycogen biosynthesis. Functionally, catalyzes the formation of the alpha-1,6-glucosidic linkages in glycogen by scission of a 1,4-alpha-linked oligosaccharide from growing alpha-1,4-glucan chains and the subsequent attachment of the oligosaccharide to the alpha-1,6 position. The chain is 1,4-alpha-glucan branching enzyme GlgB from Bordetella parapertussis (strain 12822 / ATCC BAA-587 / NCTC 13253).